Reading from the N-terminus, the 371-residue chain is Enterobactin C-glucosyltransferase (371 aa).

This sequence belongs to the glycosyltransferase 28 family.

Its subcellular location is the cytoplasm. It carries out the reaction enterobactin + UDP-alpha-D-glucose = monoglucosyl-enterobactin + UDP. It catalyses the reaction monoglucosyl-enterobactin + UDP-alpha-D-glucose = diglucosyl-enterobactin + UDP + H(+). The enzyme catalyses diglucosyl-enterobactin + UDP-alpha-D-glucose = triglucosyl-enterobactin + UDP + H(+). Its pathway is siderophore biosynthesis; enterobactin biosynthesis. Functionally, catalyzes the successive monoglucosylation, diglucosylation and triglucosylation of enterobactin (Ent). Transfers glucosyl groups from uridine-5'-diphosphoglucose (UDP-Glc) to C5 of one, two or three of the 2,3-dihydroxybenzoyl (DHB) units of Ent to yield monoglucosyl-C-Ent (MGE), diglucosyl-C-Ent (DGE) and triglucosyl-C-Ent (TGE). Glucosylation decreases the membrane affinity of Ent and increases the iron acquisition rate. The chain is Enterobactin C-glucosyltransferase from Escherichia coli O6:H1 (strain CFT073 / ATCC 700928 / UPEC).